The following is a 212-amino-acid chain: ATP-dependent dethiobiotin synthetase BioD (212 aa).

13–18 (GIGKTV) is an ATP binding site. Residue threonine 17 coordinates Mg(2+). Residue lysine 33 is part of the active site. Serine 37 is a substrate binding site. Mg(2+) is bound at residue glutamate 100. Residues 100–103 (EGAG) and 184–186 (PRL) contribute to the ATP site.

This sequence belongs to the dethiobiotin synthetase family. In terms of assembly, homodimer. Requires Mg(2+) as cofactor.

It localises to the cytoplasm. It catalyses the reaction (7R,8S)-7,8-diammoniononanoate + CO2 + ATP = (4R,5S)-dethiobiotin + ADP + phosphate + 3 H(+). It participates in cofactor biosynthesis; biotin biosynthesis; biotin from 7,8-diaminononanoate: step 1/2. Its function is as follows. Catalyzes a mechanistically unusual reaction, the ATP-dependent insertion of CO2 between the N7 and N8 nitrogen atoms of 7,8-diaminopelargonic acid (DAPA, also called 7,8-diammoniononanoate) to form a ureido ring. In Rhodopseudomonas palustris (strain TIE-1), this protein is ATP-dependent dethiobiotin synthetase BioD.